Here is a 332-residue protein sequence, read N- to C-terminus: 2-oxoglutarate-dependent dioxygenase ecdK (332 aa).

The Fe2OG dioxygenase domain occupies 178-294 (HASELRLNHY…RRSVAFFLKP (117 aa)). Residues His-206, Asp-208, and His-266 each coordinate Fe cation. Arg-285 is a binding site for 2-oxoglutarate.

It belongs to the iron/ascorbate-dependent oxidoreductase family. It depends on Fe(2+) as a cofactor.

It participates in antifungal biosynthesis. In terms of biological role, 2-oxoglutarate-dependent dioxygenase; part of the gene cluster that mediates the biosynthesis of echinocandin B, a fungal lipidated cyclic hexapeptide that acts as an antifungal agent. Linoleoyl-AMP, produced by the fatty-acyl-AMP ligase ecdI, is transferred to the initiation carrier domain (T0) of ecdA. The linoleoyl-S-phosphopantetheinyl-T0 is sequentially extended with L-ornithine, L-threonine, L-proline, L-homotyrosine, L-threonine, and 4R-methyl-L-proline to form the linear hexapeptide. Thereafter, the terminal condensation (C7) performs macrocyclization of the NRPS product and the cyclic scaffold is released from ecdA. All six of the amino acid residues are hydroxylated, including 4R,5R-dihydroxy-L-ornithine, 4R-hydroxyl-L-proline, 3S,4S-dihydroxy-L-homotyrosine, and 3S-hydroxyl-4S-methyl-L-prolin. In the pathway, all the hydroxylation reactions are proposed to occur following completion of the cyclic peptide, so the unhydroxylated precursor produced by ecdA will undergo six rounds of hydroxylation. Five hydroxylase genes (ecdG, ecdH, ecdK, htyE and htyF) are embedded within the echinocandin B (ecd) and L-homotyrosine (hty) clusters. This Aspergillus rugulosus (Emericella rugulosa) protein is 2-oxoglutarate-dependent dioxygenase ecdK.